A 591-amino-acid chain; its full sequence is Serine/threonine-protein kinase Nek2 (591 aa).

Positions 4-258 constitute a Protein kinase domain; it reads YEVLEQIGKG…AAQLLKHPQL (255 aa). ATP-binding positions include 10–18 and lysine 33; that span reads IGKGAFGSA. Aspartate 129 functions as the Proton acceptor in the catalytic mechanism. Disordered regions lie at residues 309–331, 387–408, and 500–534; these read LGNERTVTFSKPSPERNSVSSTR, EPPKTSYNRTYRSELPSKTTPN, and RTDGDNGSDSSGRNATAASSRGSNDSRQQRFDTSS. Composition is skewed to polar residues over residues 391 to 408 and 504 to 534; these read TSYNRTYRSELPSKTTPN and DNGSDSSGRNATAASSRGSNDSRQQRFDTSS.

It belongs to the protein kinase superfamily. NEK Ser/Thr protein kinase family. NIMA subfamily.

It carries out the reaction L-seryl-[protein] + ATP = O-phospho-L-seryl-[protein] + ADP + H(+). The enzyme catalyses L-threonyl-[protein] + ATP = O-phospho-L-threonyl-[protein] + ADP + H(+). Functionally, may be involved in plant development processes. This is Serine/threonine-protein kinase Nek2 (NEK2) from Oryza sativa subsp. indica (Rice).